Consider the following 454-residue polypeptide: Protein disulfide-isomerase TMX3 (454 aa).

The signal sequence occupies residues 1-24 (MAAWKSWAALRLCATVVLLDMVVC). Residues 25–128 (KGFVEDLDES…KDDIIEFAHR (104 aa)) form the Thioredoxin domain. Topologically, residues 25–375 (KGFVEDLDES…TIVSIFKSSP (351 aa)) are lumenal. Catalysis depends on nucleophile residues C53 and C56. A disulfide bond links C53 and C56. 2 N-linked (GlcNAc...) asparagine glycosylation sites follow: N258 and N313. Residues 376–396 (LMGCFLFGLPLGVISIMCYGI) traverse the membrane as a helical segment. Over 397–454 (YTADTDGGYIEERYEVSKSENENQEQIEESKEQQEPSSGGSVVPTVQEPKDVLEKKKD) the chain is Cytoplasmic. The disordered stretch occupies residues 412 to 454 (VSKSENENQEQIEESKEQQEPSSGGSVVPTVQEPKDVLEKKKD). Residues 444–454 (EPKDVLEKKKD) are compositionally biased toward basic and acidic residues. A Di-lysine motif motif is present at residues 451 to 454 (KKKD).

The protein belongs to the protein disulfide isomerase family.

It localises to the endoplasmic reticulum membrane. It catalyses the reaction Catalyzes the rearrangement of -S-S- bonds in proteins.. Its function is as follows. Probable disulfide isomerase, which participates in the folding of proteins containing disulfide bonds. May act as a dithiol oxidase. Acts as a regulator of endoplasmic reticulum-mitochondria contact sites via its ability to regulate redox signals. This is Protein disulfide-isomerase TMX3 (TMX3) from Pongo abelii (Sumatran orangutan).